A 174-amino-acid polypeptide reads, in one-letter code: Large ribosomal subunit protein uL10 (174 aa).

This sequence belongs to the universal ribosomal protein uL10 family. In terms of assembly, part of the ribosomal stalk of the 50S ribosomal subunit. The N-terminus interacts with L11 and the large rRNA to form the base of the stalk. The C-terminus forms an elongated spine to which L12 dimers bind in a sequential fashion forming a multimeric L10(L12)X complex.

In terms of biological role, forms part of the ribosomal stalk, playing a central role in the interaction of the ribosome with GTP-bound translation factors. The chain is Large ribosomal subunit protein uL10 from Nitrosospira multiformis (strain ATCC 25196 / NCIMB 11849 / C 71).